Reading from the N-terminus, the 61-residue chain is Large ribosomal subunit protein uL30 (61 aa).

It belongs to the universal ribosomal protein uL30 family. In terms of assembly, part of the 50S ribosomal subunit.

The sequence is that of Large ribosomal subunit protein uL30 from Corynebacterium diphtheriae (strain ATCC 700971 / NCTC 13129 / Biotype gravis).